The sequence spans 777 residues: B3 domain-containing protein REM-like 1 (777 aa).

The TF-B3 1 DNA-binding region spans 97–193 (FVTFTLAPVD…TPVLSLCFEE (97 aa)). 2 disordered regions span residues 200–248 (VGEE…TSPS) and 344–391 (KSSS…ESSS). Over residues 218-243 (KIVKDDNNKDESSTWKREGNHLRCKD) the composition is skewed to basic and acidic residues. The TF-B3 2 DNA-binding region spans 252–347 (TLTVTITPDS…TPVLSIKSSS (96 aa)). The segment covering 344 to 368 (KSSSGKGQSEFSKESLSIKPSSGNM) has biased composition (polar residues). Over residues 370 to 388 (KKVENNREASRKYPPRSRE) the composition is skewed to basic and acidic residues. 2 consecutive DNA-binding regions (TF-B3) follow at residues 582-676 (FLTL…RDSS) and 683-777 (FLTL…FYTK).

The protein resides in the nucleus. This is B3 domain-containing protein REM-like 1 from Arabidopsis thaliana (Mouse-ear cress).